Consider the following 88-residue polypeptide: Putative defensin-like protein 228 (88 aa).

A signal peptide spans 1–27 (MMKSAILLMVSCVFMFLVVSYIQDVEG). Disulfide bonds link cysteine 32-cysteine 88, cysteine 42-cysteine 66, cysteine 50-cysteine 82, and cysteine 64-cysteine 84.

Belongs to the DEFL family.

It localises to the secreted. In Arabidopsis thaliana (Mouse-ear cress), this protein is Putative defensin-like protein 228 (SCRL3).